A 383-amino-acid polypeptide reads, in one-letter code: L-lactate dehydrogenase (383 aa).

The FMN hydroxy acid dehydrogenase domain occupies 1-380 (MIISSGNDYR…NADCLVQAIK (380 aa)). Residue Y24 coordinates substrate. FMN is bound by residues S106 and Q127. Y129 serves as a coordination point for substrate. T155 provides a ligand contact to FMN. Position 164 (R164) interacts with substrate. FMN is bound at residue K251. H275 serves as the catalytic Proton acceptor. R278 contributes to the substrate binding site. 306–330 (DSGIRNGLDVVRMLALGADTVLLGR) lines the FMN pocket.

It belongs to the FMN-dependent alpha-hydroxy acid dehydrogenase family. FMN is required as a cofactor.

It is found in the cell inner membrane. The enzyme catalyses (S)-lactate + A = pyruvate + AH2. Its function is as follows. Catalyzes the conversion of L-lactate to pyruvate. Is coupled to the respiratory chain. The protein is L-lactate dehydrogenase of Acinetobacter baumannii (strain AB307-0294).